A 591-amino-acid polypeptide reads, in one-letter code: Peroxisome assembly protein 2 (591 aa).

A disordered region spans residues 1–78; that stretch reads MSDSDPKPTA…TNIDTNNNTN (78 aa). Over 1–148 the chain is Peroxisomal matrix; the sequence is MSDSDPKPTA…TSREGTRPAF (148 aa). Over residues 7 to 26 the composition is skewed to low complexity; it reads KPTAAKGAAPTSIPNSTRNP. Residues 27 to 54 are compositionally biased toward pro residues; it reads NPTPPNPNPNPNPISTPAPTPTATPSPP. The span at 55-78 shows a compositional bias: low complexity; it reads IASSSNNGNNSTRSTNIDTNNNTN. Residues 149–175 form a helical membrane-spanning segment; sequence RVGQVDAELLDEELVELLRGQVREALR. Topologically, residues 176 to 196 are cytoplasmic; it reads YVGGGGGGGGGGGGGGVGSGV. Residues 197-222 traverse the membrane as a helical segment; that stretch reads AQDWEAEISLALRAVLFKLTVWDHDA. Over 223 to 246 the chain is Peroxisomal matrix; it reads TYGAALQNLKYTDARRDGPALAPP. The helical transmembrane segment at 247–273 threads the bilayer; that stretch reads SRWQKALYGLVTVGGRYLWAKWEDWLL. Residues 274–283 are Cytoplasmic-facing; it reads EQDDGFEGPS. A helical transmembrane segment spans residues 284 to 314; the sequence is PRVKRLARWTSALSTLHASAALVSFLVFLLH. Residues 315 to 341 lie on the Peroxisomal matrix side of the membrane; it reads GRYRTLLDRLLRMRLAPPTSQVSREVS. The chain crosses the membrane as a helical span at residues 342-365; sequence FEYLNRQLVWHAFTEFLLFVLPLV. The Cytoplasmic portion of the chain corresponds to 366–591; it reads GINRWRRWLA…EDGLDEDPES (226 aa). Zn(2+)-binding residues include Cys-408, Cys-411, Cys-449, Cys-451, Cys-454, Cys-457, Cys-472, and Cys-475. The RING-type; atypical zinc finger occupies 408 to 475; that stretch reads CAICYRDQNS…EGEGWPCLRC (68 aa). Positions 512 to 591 are disordered; that stretch reads KAPSDHEEEE…EDGLDEDPES (80 aa). Composition is skewed to acidic residues over residues 517-537 and 575-591; these read HEEEENEEEEEQQGELGENEG and SEDYEAEEDGLDEDPES.

This sequence belongs to the pex2/pex10/pex12 family. Component of the PEX2-PEX10-PEX12 retrotranslocation channel, composed of PEX2, PEX10 and PEX12.

Its subcellular location is the peroxisome membrane. It catalyses the reaction [E2 ubiquitin-conjugating enzyme]-S-ubiquitinyl-L-cysteine + [acceptor protein]-L-cysteine = [E2 ubiquitin-conjugating enzyme]-L-cysteine + [acceptor protein]-S-ubiquitinyl-L-cysteine.. It functions in the pathway protein modification; protein ubiquitination. Functionally, E3 ubiquitin-protein ligase component of a retrotranslocation channel required for peroxisome organization by mediating export of the PEX5 receptor from peroxisomes to the cytosol, thereby promoting PEX5 recycling. The retrotranslocation channel is composed of PEX2, PEX10 and PEX12; each subunit contributing transmembrane segments that coassemble into an open channel that specifically allows the passage of PEX5 through the peroxisomal membrane. PEX2 also regulates peroxisome organization by acting as a E3 ubiquitin-protein ligase. PEX2 ubiquitinates PEX5 during its passage through the retrotranslocation channel: catalyzes monoubiquitination of PEX5 at 'Cys-6', a modification that acts as a signal for PEX5 extraction into the cytosol. The protein is Peroxisome assembly protein 2 of Thermothelomyces thermophilus (strain ATCC 42464 / BCRC 31852 / DSM 1799) (Sporotrichum thermophile).